A 224-amino-acid chain; its full sequence is Ornithine decarboxylase antizyme (224 aa).

Belongs to the ODC antizyme family. As to quaternary structure, interacts with ODC and thereby sterically blocks ODC homodimerization.

In terms of biological role, ornithine decarboxylase (ODC) antizyme protein that negatively regulates ODC activity and intracellular polyamine biosynthesis in response to increased intracellular polyamine levels. Binds to ODC monomers, inhibiting the assembly of the functional ODC homodimer, and targets the monomers for ubiquitin-independent proteolytic destruction by the 26S proteasome. This chain is Ornithine decarboxylase antizyme (spa1), found in Schizosaccharomyces octosporus (Fission yeast).